Consider the following 200-residue polypeptide: ATP-dependent Clp protease proteolytic subunit 3 (200 aa).

Ser-101 serves as the catalytic Nucleophile. His-126 is a catalytic residue.

This sequence belongs to the peptidase S14 family. As to quaternary structure, fourteen ClpP subunits assemble into 2 heptameric rings which stack back to back to give a disk-like structure with a central cavity, resembling the structure of eukaryotic proteasomes.

The protein resides in the cytoplasm. It carries out the reaction Hydrolysis of proteins to small peptides in the presence of ATP and magnesium. alpha-casein is the usual test substrate. In the absence of ATP, only oligopeptides shorter than five residues are hydrolyzed (such as succinyl-Leu-Tyr-|-NHMec, and Leu-Tyr-Leu-|-Tyr-Trp, in which cleavage of the -Tyr-|-Leu- and -Tyr-|-Trp bonds also occurs).. Its function is as follows. Cleaves peptides in various proteins in a process that requires ATP hydrolysis. Has a chymotrypsin-like activity. Plays a major role in the degradation of misfolded proteins. In Synechococcus sp. (strain CC9902), this protein is ATP-dependent Clp protease proteolytic subunit 3.